The primary structure comprises 450 residues: Citrate/malate-proton symporter (450 aa).

The Cytoplasmic portion of the chain corresponds to Met-1–Lys-32. Residues Val-33 to Met-53 form a helical membrane-spanning segment. Residues His-54 to Ser-64 are Extracellular-facing. Residues Ile-65–Val-85 traverse the membrane as a helical segment. Residues Arg-86–Ser-87 are Cytoplasmic-facing. Residues Ile-88–Leu-108 traverse the membrane as a helical segment. Topologically, residues Pro-109 to Glu-118 are extracellular. Residues Phe-119 to Leu-139 form a helical membrane-spanning segment. Residues Gly-140–Lys-152 are Cytoplasmic-facing. A helical transmembrane segment spans residues Ile-153 to Thr-173. At Leu-174–Ala-217 the chain is on the extracellular side. Residues Phe-218–Leu-238 traverse the membrane as a helical segment. The Cytoplasmic portion of the chain corresponds to Leu-239–Gln-273. The disordered stretch occupies residues Trp-249–Ser-268. Residues Met-274–Gly-294 traverse the membrane as a helical segment. Met-295 is a topological domain (extracellular). A helical transmembrane segment spans residues Leu-296–Ile-316. Topologically, residues Lys-317–Arg-335 are cytoplasmic. A helical membrane pass occupies residues Phe-336–Trp-356. The Extracellular portion of the chain corresponds to Asp-357–Asn-364. Residues Leu-365 to Thr-385 traverse the membrane as a helical segment. The Cytoplasmic portion of the chain corresponds to Gly-386–Gln-428. A helical membrane pass occupies residues Val-429 to Leu-446. At His-447–Tyr-450 the chain is on the extracellular side.

It belongs to the 2-hydroxycarboxylate transporter (2-HCT) (TC 2.A.24) family.

It is found in the cell membrane. It catalyses the reaction citrate(in) + 3 H(+)(in) = citrate(out) + 3 H(+)(out). It carries out the reaction (S)-malate(in) + 2 H(+)(in) = (S)-malate(out) + 2 H(+)(out). Its activity is regulated as follows. The uptake activity is inhibited by divalent metal ions such as Ca(2+), Mg(2+) and Ni(2+). Its function is as follows. Proton motive force-driven secondary transporter that catalyzes the uptake of both citrate and malate. Is an electroneutral proton-solute symporter: the number of protons transported is equal to the valence of the transported anions. Translocates the free citrate and malate anions. Citramalate binds to the transporter, but it is not translocated. Is strictly stereoselective, recognizing only the (S)-enantiomers of malate and citramalate. This is Citrate/malate-proton symporter from Bacillus subtilis (strain 168).